A 397-amino-acid chain; its full sequence is CCA-adding enzyme (397 aa).

2 residues coordinate ATP: glycine 32 and arginine 35. CTP is bound by residues glycine 32 and arginine 35. Residues aspartate 45 and aspartate 47 each contribute to the Mg(2+) site. 5 residues coordinate ATP: arginine 116, aspartate 159, arginine 162, arginine 165, and arginine 168. 5 residues coordinate CTP: arginine 116, aspartate 159, arginine 162, arginine 165, and arginine 168.

It belongs to the tRNA nucleotidyltransferase/poly(A) polymerase family. Bacterial CCA-adding enzyme type 3 subfamily. Homodimer. It depends on Mg(2+) as a cofactor.

The catalysed reaction is a tRNA precursor + 2 CTP + ATP = a tRNA with a 3' CCA end + 3 diphosphate. The enzyme catalyses a tRNA with a 3' CCA end + 2 CTP + ATP = a tRNA with a 3' CCACCA end + 3 diphosphate. In terms of biological role, catalyzes the addition and repair of the essential 3'-terminal CCA sequence in tRNAs without using a nucleic acid template. Adds these three nucleotides in the order of C, C, and A to the tRNA nucleotide-73, using CTP and ATP as substrates and producing inorganic pyrophosphate. tRNA 3'-terminal CCA addition is required both for tRNA processing and repair. Also involved in tRNA surveillance by mediating tandem CCA addition to generate a CCACCA at the 3' terminus of unstable tRNAs. While stable tRNAs receive only 3'-terminal CCA, unstable tRNAs are marked with CCACCA and rapidly degraded. In Latilactobacillus sakei subsp. sakei (strain 23K) (Lactobacillus sakei subsp. sakei), this protein is CCA-adding enzyme.